We begin with the raw amino-acid sequence, 296 residues long: Cytidine deaminase (296 aa).

2 consecutive CMP/dCMP-type deaminase domains span residues 47–167 (DSHE…FGPA) and 186–296 (ESDD…VDPV). 88–90 (NLE) is a binding site for substrate. H101 is a Zn(2+) binding site. The active-site Proton donor is E103. Residues C128 and C131 each coordinate Zn(2+).

It belongs to the cytidine and deoxycytidylate deaminase family. In terms of assembly, homodimer. The cofactor is Zn(2+).

It catalyses the reaction cytidine + H2O + H(+) = uridine + NH4(+). The catalysed reaction is 2'-deoxycytidine + H2O + H(+) = 2'-deoxyuridine + NH4(+). Its function is as follows. This enzyme scavenges exogenous and endogenous cytidine and 2'-deoxycytidine for UMP synthesis. This chain is Cytidine deaminase, found in Shewanella amazonensis (strain ATCC BAA-1098 / SB2B).